The sequence spans 364 residues: Growth hormone secretagogue receptor type 1 (364 aa).

Over 1-40 the chain is Extracellular; the sequence is MWNATPSEEPEPNVTLDLDWDASPGNDSLPDELLPLFPAP. Residues Asn13 and Asn26 are each glycosylated (N-linked (GlcNAc...) asparagine). Residues 41–66 form a helical membrane-spanning segment; that stretch reads LLAGVTATCVALFVVGISGNLLTMLV. Residues 67–72 are Cytoplasmic-facing; it reads VSRFRE. Residues 73–96 form a helical membrane-spanning segment; the sequence is LRTTTNLYLSSMAFSDLLIFLCMP. Residues 97–117 are Extracellular-facing; that stretch reads LDLVRLWQYRPWNFGDLLCKL. Cys115 and Cys197 form a disulfide bridge. The helical transmembrane segment at 118–139 threads the bilayer; sequence FQFVSESCTYATVLTITALSVE. The Cytoplasmic portion of the chain corresponds to 140 to 162; that stretch reads RYFAICFPLRAKVVVTKGRVKLV. The chain crosses the membrane as a helical span at residues 163–183; that stretch reads ILVIWAVAFCSAGPIFVLVGV. At 184-211 the chain is on the extracellular side; sequence EHENGTDPRDTNECRATEFAVRSGLLTV. N-linked (GlcNAc...) asparagine glycosylation occurs at Asn187. Residues 212-235 traverse the membrane as a helical segment; the sequence is MVWVSSVFFFLPVFCLTVLYSLIG. Residues 236–263 lie on the Cytoplasmic side of the membrane; it reads RKLWRRRGDAAVGASLRDQNHKQTVKML. A helical transmembrane segment spans residues 264-285; the sequence is AVVVFAFILCWLPFHVGRYLFS. At 286-302 the chain is on the extracellular side; it reads KSFEPGSLEIAQISQYC. Residues 303-326 form a helical membrane-spanning segment; sequence NLVSFVLFYLSAAINPILYNIMSK. The Cytoplasmic portion of the chain corresponds to 327–364; that stretch reads KYRVAVFKLLGFESFSQRKLSTLKDESSRAWTKSSINT.

It belongs to the G-protein coupled receptor 1 family.

The protein localises to the cell membrane. Its function is as follows. Receptor for ghrelin, coupled to G-alpha-11 proteins. Stimulates growth hormone secretion. Also binds other growth hormone releasing peptides (GHRP) (e.g. Met-enkephalin and GHRP-6) as well as non-peptide, low molecular weight secretagogues (e.g. L-692,429, MK-0677, adenosine). The protein is Growth hormone secretagogue receptor type 1 (Ghsr) of Rattus norvegicus (Rat).